A 265-amino-acid chain; its full sequence is Phosphonates import ATP-binding protein PhnC (265 aa).

The region spanning 18–262 (LVVEHLRKEY…HLKQIYGGEE (245 aa)) is the ABC transporter domain. ATP is bound at residue 51–58 (GPSGTGKS).

Belongs to the ABC transporter superfamily. Phosphonates importer (TC 3.A.1.9.1) family. In terms of assembly, the complex is composed of two ATP-binding proteins (PhnC), two transmembrane proteins (PhnE) and a solute-binding protein (PhnD).

It is found in the cell inner membrane. It catalyses the reaction phosphonate(out) + ATP + H2O = phosphonate(in) + ADP + phosphate + H(+). Functionally, part of the ABC transporter complex PhnCDE involved in phosphonates import. Responsible for energy coupling to the transport system. This chain is Phosphonates import ATP-binding protein PhnC, found in Nitratidesulfovibrio vulgaris (strain ATCC 29579 / DSM 644 / CCUG 34227 / NCIMB 8303 / VKM B-1760 / Hildenborough) (Desulfovibrio vulgaris).